Consider the following 180-residue polypeptide: Large ribosomal subunit protein uL18m (180 aa).

It belongs to the universal ribosomal protein uL18 family. In terms of assembly, component of the mitochondrial ribosome large subunit (39S) which comprises a 16S rRNA and about 50 distinct proteins.

The protein localises to the mitochondrion. In terms of biological role, together with thiosulfate sulfurtransferase (TST), acts as a mitochondrial import factor for the cytosolic 5S rRNA. The precursor form shows RNA chaperone activity; is able to fold the 5S rRNA into an import-competent conformation that is recognized by rhodanese (TST). Both the cytoplasmic and mitochondrial forms are able to bind to the helix IV-loop D in the gamma domain of the 5S rRNA. The protein is Large ribosomal subunit protein uL18m (Mrpl18) of Mus musculus (Mouse).